A 348-amino-acid chain; its full sequence is Protein RecA (348 aa).

65-72 (GPESSGKT) is an ATP binding site.

The protein belongs to the RecA family.

It localises to the cytoplasm. Its function is as follows. Can catalyze the hydrolysis of ATP in the presence of single-stranded DNA, the ATP-dependent uptake of single-stranded DNA by duplex DNA, and the ATP-dependent hybridization of homologous single-stranded DNAs. It interacts with LexA causing its activation and leading to its autocatalytic cleavage. The chain is Protein RecA from Saccharophagus degradans (strain 2-40 / ATCC 43961 / DSM 17024).